A 578-amino-acid polypeptide reads, in one-letter code: Lysine--tRNA ligase (578 aa).

Residues Glu-414 and Glu-421 each coordinate Mg(2+).

This sequence belongs to the class-II aminoacyl-tRNA synthetase family. In terms of assembly, homodimer. The cofactor is Mg(2+).

Its subcellular location is the cytoplasm. It carries out the reaction tRNA(Lys) + L-lysine + ATP = L-lysyl-tRNA(Lys) + AMP + diphosphate. This Porphyromonas gingivalis (strain ATCC 33277 / DSM 20709 / CIP 103683 / JCM 12257 / NCTC 11834 / 2561) protein is Lysine--tRNA ligase.